We begin with the raw amino-acid sequence, 176 residues long: Dual-action ribosomal maturation protein DarP (176 aa).

This sequence belongs to the DarP family.

Its subcellular location is the cytoplasm. In terms of biological role, member of a network of 50S ribosomal subunit biogenesis factors which assembles along the 30S-50S interface, preventing incorrect 23S rRNA structures from forming. Promotes peptidyl transferase center (PTC) maturation. This chain is Dual-action ribosomal maturation protein DarP, found in Actinobacillus pleuropneumoniae serotype 5b (strain L20).